A 165-amino-acid chain; its full sequence is Small ribosomal subunit protein bS16 (165 aa).

Residues 110–165 form a disordered region; the sequence is LSEANNGPTAEAITEKKKKAREDKEAKEAAEKAAAEKAAAAESEEAPAEEAAAEEA. Basic and acidic residues predominate over residues 129 to 144; the sequence is AREDKEAKEAAEKAAA. Residues 151 to 165 are compositionally biased toward acidic residues; sequence ESEEAPAEEAAAEEA.

This sequence belongs to the bacterial ribosomal protein bS16 family.

This Corynebacterium glutamicum (strain R) protein is Small ribosomal subunit protein bS16.